Here is a 203-residue protein sequence, read N- to C-terminus: Imidazoleglycerol-phosphate dehydratase (203 aa).

The protein belongs to the imidazoleglycerol-phosphate dehydratase family.

The protein resides in the cytoplasm. The catalysed reaction is D-erythro-1-(imidazol-4-yl)glycerol 3-phosphate = 3-(imidazol-4-yl)-2-oxopropyl phosphate + H2O. It participates in amino-acid biosynthesis; L-histidine biosynthesis; L-histidine from 5-phospho-alpha-D-ribose 1-diphosphate: step 6/9. The sequence is that of Imidazoleglycerol-phosphate dehydratase from Salinispora tropica (strain ATCC BAA-916 / DSM 44818 / JCM 13857 / NBRC 105044 / CNB-440).